The chain runs to 391 residues: Formate-dependent phosphoribosylglycinamide formyltransferase (391 aa).

N(1)-(5-phospho-beta-D-ribosyl)glycinamide contacts are provided by residues glutamate 20 to leucine 21 and glutamate 80. Residues arginine 112, lysine 153, serine 158–glutamine 163, glutamate 193–isoleucine 196, and glutamate 201 each bind ATP. The 190-residue stretch at arginine 117–leucine 306 folds into the ATP-grasp domain. Mg(2+)-binding residues include glutamate 265 and glutamate 277. Residues aspartate 284, lysine 354, and arginine 361–arginine 362 each bind N(1)-(5-phospho-beta-D-ribosyl)glycinamide.

It belongs to the PurK/PurT family. Homodimer.

It catalyses the reaction N(1)-(5-phospho-beta-D-ribosyl)glycinamide + formate + ATP = N(2)-formyl-N(1)-(5-phospho-beta-D-ribosyl)glycinamide + ADP + phosphate + H(+). The protein operates within purine metabolism; IMP biosynthesis via de novo pathway; N(2)-formyl-N(1)-(5-phospho-D-ribosyl)glycinamide from N(1)-(5-phospho-D-ribosyl)glycinamide (formate route): step 1/1. Its function is as follows. Involved in the de novo purine biosynthesis. Catalyzes the transfer of formate to 5-phospho-ribosyl-glycinamide (GAR), producing 5-phospho-ribosyl-N-formylglycinamide (FGAR). Formate is provided by PurU via hydrolysis of 10-formyl-tetrahydrofolate. This Shewanella sp. (strain ANA-3) protein is Formate-dependent phosphoribosylglycinamide formyltransferase.